A 323-amino-acid chain; its full sequence is Fructose-1,6-bisphosphatase class 1 (323 aa).

Mg(2+) contacts are provided by Glu84, Asp103, Leu105, and Asp106. Substrate is bound by residues 106 to 109 (DGSS), Asn198, and Lys264. A Mg(2+)-binding site is contributed by Glu270.

The protein belongs to the FBPase class 1 family. Homotetramer. It depends on Mg(2+) as a cofactor.

The protein localises to the cytoplasm. The enzyme catalyses beta-D-fructose 1,6-bisphosphate + H2O = beta-D-fructose 6-phosphate + phosphate. Its pathway is carbohydrate biosynthesis; gluconeogenesis. This chain is Fructose-1,6-bisphosphatase class 1, found in Cellvibrio japonicus (strain Ueda107) (Pseudomonas fluorescens subsp. cellulosa).